Here is a 324-residue protein sequence, read N- to C-terminus: Type II restriction enzyme AplI (324 aa).

Belongs to the BsuBI/PstI type II restriction endonuclease family. Mg(2+) is required as a cofactor.

The catalysed reaction is Endonucleolytic cleavage of DNA to give specific double-stranded fragments with terminal 5'-phosphates.. Activated by K(+) and Na(+) ions, whereas NH(4)(+) ions appear to inhibit endonuclease activity. Its function is as follows. A P subtype restriction enzyme that recognizes the double-stranded sequence 5'-CTGCAG-3' and cleaves after A-5. In Arthrospira platensis (strain NIES-39 / UTEX 3086 / IAM M-135) (Spirulina platensis), this protein is Type II restriction enzyme AplI (aplIR).